A 552-amino-acid chain; its full sequence is Urocanate hydratase (552 aa).

Residues 50–51 (GG), glutamine 128, 174–176 (GMG), glutamate 194, arginine 199, 261–265 (QTSAH), 271–272 (YI), and tyrosine 320 each bind NAD(+). The active site involves cysteine 408. Glycine 490 serves as a coordination point for NAD(+).

The protein belongs to the urocanase family. NAD(+) serves as cofactor.

It is found in the cytoplasm. The catalysed reaction is 4-imidazolone-5-propanoate = trans-urocanate + H2O. It functions in the pathway amino-acid degradation; L-histidine degradation into L-glutamate; N-formimidoyl-L-glutamate from L-histidine: step 2/3. Its function is as follows. Catalyzes the conversion of urocanate to 4-imidazolone-5-propionate. The chain is Urocanate hydratase from Bdellovibrio bacteriovorus (strain ATCC 15356 / DSM 50701 / NCIMB 9529 / HD100).